Reading from the N-terminus, the 167-residue chain is Ribosome rescue factor SmrB (167 aa).

Residues 91 to 166 form the Smr domain; it reads LDLHGLTREQ…GEAAILILVD (76 aa).

This sequence belongs to the SmrB family. In terms of assembly, associates with collided ribosomes, but not with correctly translating polysomes.

Its function is as follows. Acts as a ribosome collision sensor. Detects stalled/collided disomes (pairs of ribosomes where the leading ribosome is stalled and a second ribosome has collided with it) and endonucleolytically cleaves mRNA at the 5' boundary of the stalled ribosome. Stalled/collided disomes form a new interface (primarily via the 30S subunits) that binds SmrB. Cleaved mRNA becomes available for tmRNA ligation, leading to ribosomal subunit dissociation and rescue of stalled ribosomes. The polypeptide is Ribosome rescue factor SmrB (Haemophilus influenzae (strain ATCC 51907 / DSM 11121 / KW20 / Rd)).